The chain runs to 162 residues: uncharacterized protein (162 aa).

Residues 1–34 (MRKKNNIKKWLLIIAGFLIICIITLFVMVSGNKV) form the signal peptide.

This is an uncharacterized protein from Bacillus subtilis (strain 168).